Here is a 124-residue protein sequence, read N- to C-terminus: Ribonuclease pancreatic A (124 aa).

A disordered region spans residues A1–N24. Positions 7 and 10 each coordinate substrate. Catalysis depends on H12, which acts as the Proton acceptor. 4 disulfides stabilise this stretch: C26-C84, C40-C95, C58-C110, and C65-C72. Substrate-binding positions include K41 to T45, K66, and R85. The Proton donor role is filled by H119.

It belongs to the pancreatic ribonuclease family. In terms of tissue distribution, pancreas.

It is found in the secreted. The enzyme catalyses an [RNA] containing cytidine + H2O = an [RNA]-3'-cytidine-3'-phosphate + a 5'-hydroxy-ribonucleotide-3'-[RNA].. The catalysed reaction is an [RNA] containing uridine + H2O = an [RNA]-3'-uridine-3'-phosphate + a 5'-hydroxy-ribonucleotide-3'-[RNA].. The polypeptide is Ribonuclease pancreatic A (Cavia porcellus (Guinea pig)).